The sequence spans 376 residues: General transcription factor IIH subunit 2 (376 aa).

Residues 64 to 206 (HVMIVIDCSR…NIRCSAIGLS (143 aa)) enclose the VWFA domain. Residues 286–303 (CTQCGARHCSIPAECPVC) form a C4-type zinc finger.

The protein belongs to the GTF2H2 family. In terms of assembly, component of the 7-subunit TFIIH core complex composed of xpb-1, xpd-1, gtf-2H1, gtf-2H2C, gtf-2H3, Y73F8A.24 and gtf-2H5, which is active in NER. The core complex associates with the 3-subunit CDK-activating kinase (CAK) module composed of cyh-1, cdk-7 and mnat-1 to form the 10-subunit holoenzyme (holo-TFIIH) active in transcription.

The protein localises to the nucleus. Component of the general transcription and DNA repair factor IIH (TFIIH) core complex, which is involved in general and transcription-coupled nucleotide excision repair (NER) of damaged DNA and, when complexed to CAK, in RNA transcription by RNA polymerase II. In NER, TFIIH acts by opening DNA around the lesion to allow the excision of the damaged oligonucleotide and its replacement by a new DNA fragment. In transcription, TFIIH has an essential role in transcription initiation. When the pre-initiation complex (PIC) has been established, TFIIH is required for promoter opening and promoter escape. Phosphorylation of the C-terminal tail (CTD) of the largest subunit of RNA polymerase II by the kinase module CAK controls the initiation of transcription. The protein is General transcription factor IIH subunit 2 of Caenorhabditis elegans.